A 134-amino-acid chain; its full sequence is Small ribosomal subunit protein uS8c (134 aa).

The protein belongs to the universal ribosomal protein uS8 family. Part of the 30S ribosomal subunit.

It is found in the plastid. Its subcellular location is the chloroplast. One of the primary rRNA binding proteins, it binds directly to 16S rRNA central domain where it helps coordinate assembly of the platform of the 30S subunit. The protein is Small ribosomal subunit protein uS8c (rps8) of Chloranthus spicatus (Chulantree).